The following is a 65-amino-acid chain: Large ribosomal subunit protein bL35 (65 aa).

Belongs to the bacterial ribosomal protein bL35 family.

The sequence is that of Large ribosomal subunit protein bL35 from Caldicellulosiruptor saccharolyticus (strain ATCC 43494 / DSM 8903 / Tp8T 6331).